A 141-amino-acid polypeptide reads, in one-letter code: Large ribosomal subunit protein uL11 (141 aa).

It belongs to the universal ribosomal protein uL11 family. In terms of assembly, part of the ribosomal stalk of the 50S ribosomal subunit. Interacts with L10 and the large rRNA to form the base of the stalk. L10 forms an elongated spine to which L12 dimers bind in a sequential fashion forming a multimeric L10(L12)X complex. Post-translationally, one or more lysine residues are methylated.

Forms part of the ribosomal stalk which helps the ribosome interact with GTP-bound translation factors. The protein is Large ribosomal subunit protein uL11 of Chlorobaculum parvum (strain DSM 263 / NCIMB 8327) (Chlorobium vibrioforme subsp. thiosulfatophilum).